A 464-amino-acid chain; its full sequence is Cysteine--tRNA ligase (464 aa).

Cysteine 27 contributes to the Zn(2+) binding site. Residues 29-39 (PTVYNFFHIGN) carry the 'HIGH' region motif. Zn(2+) contacts are provided by cysteine 207, histidine 232, and glutamate 236. The 'KMSKS' region motif lies at 264–268 (KMSKS). Lysine 267 provides a ligand contact to ATP.

It belongs to the class-I aminoacyl-tRNA synthetase family. As to quaternary structure, monomer. Zn(2+) serves as cofactor.

It localises to the cytoplasm. It carries out the reaction tRNA(Cys) + L-cysteine + ATP = L-cysteinyl-tRNA(Cys) + AMP + diphosphate. This chain is Cysteine--tRNA ligase, found in Clostridium acetobutylicum (strain ATCC 824 / DSM 792 / JCM 1419 / IAM 19013 / LMG 5710 / NBRC 13948 / NRRL B-527 / VKM B-1787 / 2291 / W).